The following is a 220-amino-acid chain: MELYLDTANVAEVERLARIFPIAGVTTNPSIVAASKESIWDVLPRLQNAIGEEGTLFAQTMSRDAKGMVEEAKRLNNAIPGIVVKIPVTAEGLAAIKQLKKEGIVTLGTAVYSASQGLLAALAGAKYVAPYVNRVDAQGGDGIRMVQELQTLLERHAPDSMVLAASFKTPRQALDCLLAGCQAITLPLDVAQQMLNTPAVESAIEKFEQDWKNAFGNLNL.

The Schiff-base intermediate with substrate role is filled by Lys-85.

It belongs to the transaldolase family. Type 3A subfamily. As to quaternary structure, homodecamer.

It localises to the cytoplasm. It catalyses the reaction beta-D-fructose 6-phosphate = dihydroxyacetone + D-glyceraldehyde 3-phosphate. In terms of biological role, catalyzes the reversible formation of fructose 6-phosphate from dihydroxyacetone and D-glyceraldehyde 3-phosphate via an aldolization reaction. This is Fructose-6-phosphate aldolase from Salmonella arizonae (strain ATCC BAA-731 / CDC346-86 / RSK2980).